A 147-amino-acid chain; its full sequence is Globin (147 aa).

Position 2 is an N-acetylserine (Ser-2). The Globin domain occupies 2–147 (SLSAAEADLA…IIDALKAAGK (146 aa)). Residue His-96 participates in heme b binding.

Belongs to the globin family. In terms of assembly, monomer.

This Aplysia limacina (Sea hare) protein is Globin.